The chain runs to 154 residues: Urease accessory protein UreE (154 aa).

The disordered stretch occupies residues proline 134–aspartate 154. Basic residues predominate over residues glycine 143–aspartate 154.

This sequence belongs to the UreE family.

The protein localises to the cytoplasm. Involved in urease metallocenter assembly. Binds nickel. Probably functions as a nickel donor during metallocenter assembly. The protein is Urease accessory protein UreE of Alteromonas mediterranea (strain DSM 17117 / CIP 110805 / LMG 28347 / Deep ecotype).